Here is a 165-residue protein sequence, read N- to C-terminus: uncharacterized protein (165 aa).

The protein belongs to the IIV-6 196R family.

This is an uncharacterized protein from Invertebrate iridescent virus 3 (IIV-3).